A 349-amino-acid chain; its full sequence is GTPase Obg (349 aa).

Residues 1-159 (MKFLDEAKVY…RWIWLRLKLI (159 aa)) form the Obg domain. The OBG-type G domain maps to 160–327 (ADAGLVGLPN…ALRALVAVIG (168 aa)). GTP-binding positions include 166–173 (GLPNAGKS), 191–195 (FTTLH), 212–215 (DIPG), 279–282 (NKID), and 308–310 (SGV). 2 residues coordinate Mg(2+): Ser173 and Thr193.

The protein belongs to the TRAFAC class OBG-HflX-like GTPase superfamily. OBG GTPase family. In terms of assembly, monomer. Requires Mg(2+) as cofactor.

It is found in the cytoplasm. In terms of biological role, an essential GTPase which binds GTP, GDP and possibly (p)ppGpp with moderate affinity, with high nucleotide exchange rates and a fairly low GTP hydrolysis rate. Plays a role in control of the cell cycle, stress response, ribosome biogenesis and in those bacteria that undergo differentiation, in morphogenesis control. The sequence is that of GTPase Obg from Rhodopseudomonas palustris (strain BisA53).